A 301-amino-acid polypeptide reads, in one-letter code: Polynucleotide kinase (301 aa).

As to quaternary structure, homotetramer. Requires Mg(2+) as cofactor.

The enzyme catalyses a 5'-end dephospho-2'-deoxyribonucleoside-DNA + ATP = a 5'-end 5'-phospho-2'-deoxyribonucleoside-DNA + ADP + H(+). The catalysed reaction is a 2'-deoxyribonucleoside 3'-phosphate + H2O = a 2'-deoxyribonucleoside + phosphate. In terms of biological role, acts as a 5'-hydroxyl kinase, a 3'-phosphatase and a 2',3'-cyclic phosphodiesterase. Catalyzes the transfer of the terminal phosphate of ATP to the 5'-hydroxyl termini of ribo- and deoxyribonucleotides. In the presence of ADP the enzyme also catalyzes an exchange reaction. In the exchange reaction, an excess ADP causes the enzyme to transfer the 5' terminal phosphate from phosphorylated DNA to ADP. Involved in countering a host defense mechanism which activates T4-induced anticodon nuclease and shuts off viral translation. The polynucleotide kinase modifies the ends of nicked tRNA generated by the antiviral response of the host bacteria and facilitates repair by T4 RNA ligase. In Escherichia coli (Bacteriophage T4), this protein is Polynucleotide kinase (pseT).